A 491-amino-acid chain; its full sequence is Pentatricopeptide repeat-containing protein At5g27460 (491 aa).

10 PPR repeats span residues 69–99, 105–139, 142–176, 177–211, 212–246, 248–278, 283–313, 318–348, 353–387, and 388–426; these read SLSE…MENQ, SVYD…SVSM, AKSA…GFLV, TPHP…KIPR, NVLS…KSVE, GWSS…AEKM, NRLG…SKSV, SCVN…WEAQ, DVRV…GGTP, and NYKT…HWRP.

Belongs to the PPR family. P subfamily.

This is Pentatricopeptide repeat-containing protein At5g27460 from Arabidopsis thaliana (Mouse-ear cress).